The chain runs to 1238 residues: MSGTPRRPASGADSFHKPEPEIVGPGTPGFPEQEEDDLHRTLGVERFEEILQEAGSRGGEELGRSYGEEDFEYHRQSSHHIHHPLSTHLPPDARRRKTPQGQVRKPRRRPGATPAGETPTIEEGEEDEDETSEAEGPVSHTDPSPASTPTSVQFFLQEDEGTDRKAERTSPSPPAQLPHQEAAPQATKKAQPDALVEEAIMVSGGTAGGDDGGASGRPLSKAQPGHRSYNLQERRRIGSMTGVEQALLPRVPTDESEAQTLATADLDLMKSHRFEDVPGVRRHLVRKNAKGSSQSSREGREPGPTPRTRPRAPHKPHEVFVELNELLLDKNQEPQWRETARWIKFEEDVEEETERWGKPHVASLSFRSLLELRRTLAHGAVLLDLDQQTLPGVAHQVVEQMVISDQIKAEDRANVLRALLLKHSHPSDEKEFSFPRNISAGSLGSLLGHHHTQGAESDPHVTEPLIGGVPETRLEVERERELPPPAPPAGITRSKSKHELKLLEKIPENAEATVVLVGCVEFLSRPTMAFVRLREAVELDAVLEVPVPVRFLFLLLGPSSANMDYHEIGRSISTLMSDKQFHEAAYLADEREDLLTAINAFLDCSVVLPPSEVQGEELLRSVAHFQRQMLKKREEQGRLLPPGVGLEPKSAQEKAFLQMVEAVGAVEDDDPLRRTGRPFGGLIRDVKRRYPHYLSDFRDALDPQCLAAVIFIYFAALSPAITFGGLLGEKTHDLIGVSELIMSTALQGVTFCLLGAQPLLVIGFSGPLLVFEEAFYSFCRSNELEYLVGRVWIGFWLVLSALLMVALEGSFLVRFGSRFTQEIFAFLISLIFIYETFYKLVKIFQEHPLHGCLASNSSEADGGKNTTWTEAAPTPGHGNTSSAEQAGVERPQGQPNTALLSLVLMAGTFFIAFFLRKFKNSRFFPGRIRRVIGDFGVPIAILIMVLVDYSIQDTYTQKLSVPSGFSVTAPEKRGWIINPLGEEEPFPVWMMVASLLPAILVFILIFMETQITTLIISKKERMLQKGSGFHLDLLLIVAMGGICALFGLLWLAAATVRSVTHANALTVMSKAVAPGDKPKIQEVKEQRVTGLLVALLVGLSLVIGDLLRQIPLAVLFGIFLYMGVTSLNGIQFYERLHLLLMPPKHHPDVMYVKKVRTMRMHLFKALQLLCLALLWAVMSTAASLAFPFILILTVPLRMVVLTRIFTEREMKCLDANEAEPVFDEREGVDEYNEMPMPV.

The segment at 1–238 (MSGTPRRPAS…YNLQERRRIG (238 aa)) is disordered. The Cytoplasmic portion of the chain corresponds to 1–704 (MSGTPRRPAS…SDFRDALDPQ (704 aa)). Composition is skewed to basic and acidic residues over residues 37–49 (DLHRTLGVERFEE) and 58–75 (GGEELGRSYGEEDFEYHR). 2 stretches are compositionally biased toward basic residues: residues 76-85 (QSSHHIHHPL) and 94-110 (RRRKTPQGQVRKPRRRP). Positions 120-133 (TIEEGEEDEDETSE) are enriched in acidic residues. Phosphoserine occurs at positions 132, 144, 170, and 172. Over residues 141–154 (TDPSPASTPTSVQF) the composition is skewed to polar residues. The span at 205 to 215 (GTAGGDDGGAS) shows a compositional bias: gly residues. Residue Ser-239 is modified to Phosphoserine. Position 253 is a phosphothreonine (Thr-253). An N6-methyllysine modification is found at Lys-270. Positions 277-315 (VPGVRRHLVRKNAKGSSQSSREGREPGPTPRTRPRAPHK) are disordered. Over residues 280-289 (VRRHLVRKNA) the composition is skewed to basic residues. Ser-439 carries the phosphoserine modification. The segment at 445-466 (SLLGHHHTQGAESDPHVTEPLI) is disordered. The next 4 membrane-spanning stretches (helical) occupy residues 705-728 (CLAAVIFIYFAALSPAITFGGLLG), 734-771 (LIGVSELIMSTALQGVTFCLLGAQPLLVIGFSGPLLVF), 791-813 (VWIGFWLVLSALLMVALEGSFLV), and 823-844 (IFAFLISLIFIYETFYKLVKIF). The membrane (anion exchange) stretch occupies residues 705–1238 (CLAAVIFIYF…DEYNEMPMPV (534 aa)). Over 845–897 (QEHPLHGCLASNSSEADGGKNTTWTEAAPTPGHGNTSSAEQAGVERPQGQPNT) the chain is Extracellular. 3 N-linked (GlcNAc...) asparagine glycosylation sites follow: Asn-856, Asn-865, and Asn-879. A compositionally biased stretch (polar residues) spans 858 to 869 (SEADGGKNTTWT). The tract at residues 858–892 (SEADGGKNTTWTEAAPTPGHGNTSSAEQAGVERPQ) is disordered. Residues 898–915 (ALLSLVLMAGTFFIAFFL) traverse the membrane as a helical segment. Residues 916–930 (RKFKNSRFFPGRIRR) lie on the Cytoplasmic side of the membrane. 5 helical membrane-spanning segments follow: residues 931–951 (VIGDFGVPIAILIMVLVDYSI), 985–1007 (PFPVWMMVASLLPAILVFILIFM), 1033–1054 (LLLIVAMGGICALFGLLWLAAA), 1088–1133 (VTGL…IQFY), and 1160–1196 (MHLFKALQLLCLALLWAVMSTAASLAFPFILILTVPL). Residue Cys-1170 is the site of S-palmitoyl cysteine attachment.

It belongs to the anion exchanger (TC 2.A.31) family. In terms of tissue distribution, expressed in the cochlea (at protein level).

It is found in the apical cell membrane. The protein localises to the basolateral cell membrane. It catalyses the reaction hydrogencarbonate(in) + chloride(out) = hydrogencarbonate(out) + chloride(in). Its function is as follows. Sodium-independent anion exchanger which mediates the electroneutral exchange of chloride for bicarbonate ions across the cell membrane. Plays an important role in osteoclast differentiation and function. Regulates bone resorption and calpain-dependent actin cytoskeleton organization in osteoclasts via anion exchange-dependent control of pH. Essential for intracellular pH regulation in CD8(+) T-cells upon CD3 stimulation, modulating CD8(+) T-cell response. The sequence is that of Anion exchange protein 2 (SLC4A2) from Cavia porcellus (Guinea pig).